The chain runs to 393 residues: Ceramide synthase 4 (393 aa).

Topologically, residues M1–L31 are lumenal. Residue N19 is glycosylated (N-linked (GlcNAc...) asparagine). Residues V32–V52 form a helical membrane-spanning segment. The segment at W67–S128 is homeobox-like. The 202-residue stretch at K131–H332 folds into the TLC domain. 4 helical membrane-spanning segments follow: residues F140–L160, L179–F199, V217–L237, and F265–I285. Residues D291–G301 carry the Last loop motif motif. Residues F304–L324 traverse the membrane as a helical segment. At R325–T393 the chain is on the cytoplasmic side. The segment at R341–T393 is disordered. Phosphoserine occurs at positions 342, 349, and 350. Positions E345–V355 are enriched in acidic residues.

Phosphorylated at the C-terminus by CK2. In terms of tissue distribution, ubiquitously expressed, with highest levels in skin.

It localises to the endoplasmic reticulum membrane. The enzyme catalyses sphinganine + octadecanoyl-CoA = N-(octadecanoyl)-sphinganine + CoA + H(+). It carries out the reaction eicosanoyl-CoA + sphinganine = N-eicosanoylsphinganine + CoA + H(+). The catalysed reaction is docosanoyl-CoA + sphinganine = N-docosanoylsphinganine + CoA + H(+). It catalyses the reaction tetracosanoyl-CoA + sphinganine = N-tetracosanoylsphinganine + CoA + H(+). The enzyme catalyses hexacosanoyl-CoA + sphinganine = N-hexacosanoylsphinganine + CoA + H(+). It carries out the reaction a fatty acyl-CoA + sphing-4-enine = an N-acylsphing-4-enine + CoA + H(+). The catalysed reaction is sphing-4-enine + octadecanoyl-CoA = N-octadecanoylsphing-4-enine + CoA + H(+). It catalyses the reaction hexadecasphinganine + octadecanoyl-CoA = N-octadecanoylhexadecasphinganine + CoA + H(+). The protein operates within lipid metabolism; sphingolipid metabolism. In terms of biological role, ceramide synthase that catalyzes formation of ceramide from sphinganine and acyl-CoA substrates, with high selectivity toward long and very-long chains (C18:0-C22:0) as acyl donor. The sequence is that of Ceramide synthase 4 from Mus musculus (Mouse).